Reading from the N-terminus, the 411-residue chain is Argininosuccinate synthase (411 aa).

ATP is bound at residue 11-19 (AYSGGLDTS). Tyr88 contacts L-citrulline. Gly118 lines the ATP pocket. Residues Thr120, Asn124, and Asp125 each coordinate L-aspartate. Asn124 is an L-citrulline binding site. Residues Arg128, Ser176, Glu261, and Tyr273 each contribute to the L-citrulline site.

This sequence belongs to the argininosuccinate synthase family. Type 1 subfamily. As to quaternary structure, homotetramer.

It is found in the cytoplasm. It carries out the reaction L-citrulline + L-aspartate + ATP = 2-(N(omega)-L-arginino)succinate + AMP + diphosphate + H(+). Its pathway is amino-acid biosynthesis; L-arginine biosynthesis; L-arginine from L-ornithine and carbamoyl phosphate: step 2/3. This is Argininosuccinate synthase from Lactiplantibacillus plantarum (strain ATCC BAA-793 / NCIMB 8826 / WCFS1) (Lactobacillus plantarum).